A 366-amino-acid polypeptide reads, in one-letter code: Ribosomal RNA large subunit methyltransferase M (366 aa).

Residues S188, 221–224 (CPGG), D240, D260, and D277 contribute to the S-adenosyl-L-methionine site. K306 serves as the catalytic Proton acceptor.

Belongs to the class I-like SAM-binding methyltransferase superfamily. RNA methyltransferase RlmE family. RlmM subfamily. As to quaternary structure, monomer.

The protein resides in the cytoplasm. It catalyses the reaction cytidine(2498) in 23S rRNA + S-adenosyl-L-methionine = 2'-O-methylcytidine(2498) in 23S rRNA + S-adenosyl-L-homocysteine + H(+). Catalyzes the 2'-O-methylation at nucleotide C2498 in 23S rRNA. The chain is Ribosomal RNA large subunit methyltransferase M from Shigella flexneri serotype 5b (strain 8401).